Reading from the N-terminus, the 911-residue chain is Beta-galactosidase 12 (911 aa).

Positions 1–25 (MAARVAAAVAAALLAAALLLPGAAA) are cleaved as a signal peptide. The active-site Proton donor is the Glu-192. Residue Glu-262 is the Nucleophile of the active site. Residues Asn-263, Asn-389, Asn-473, and Asn-777 are each glycosylated (N-linked (GlcNAc...) asparagine). In terms of domain architecture, SUEL-type lectin spans 744 to 831 (EDTSTRGTLN…ATLAVQLLLA (88 aa)).

The protein belongs to the glycosyl hydrolase 35 family.

The protein resides in the secreted. Its subcellular location is the extracellular space. It is found in the apoplast. It carries out the reaction Hydrolysis of terminal non-reducing beta-D-galactose residues in beta-D-galactosides.. The protein is Beta-galactosidase 12 of Oryza sativa subsp. japonica (Rice).